Consider the following 86-residue polypeptide: MKTILQLLVRAYQLGISPFLGQNCRFYPSCSSYAIEALEEHGALKGSFLATKRLCKCHPWHAGGVDPVPKKSSSKTSTTACGCGHS.

Residues 64 to 86 are disordered; it reads GVDPVPKKSSSKTSTTACGCGHS. A compositionally biased stretch (low complexity) spans 70–79; sequence KKSSSKTSTT.

The protein belongs to the UPF0161 family.

It localises to the cell inner membrane. Its function is as follows. Could be involved in insertion of integral membrane proteins into the membrane. This Janthinobacterium sp. (strain Marseille) (Minibacterium massiliensis) protein is Putative membrane protein insertion efficiency factor.